The primary structure comprises 229 residues: Glutathione S-transferase 3 (229 aa).

Ala2 is modified (blocked amino end (Ala)). Positions 3–83 (AKPVLYYFNG…YIAGKYNLYG (81 aa)) constitute a GST N-terminal domain. Glutathione is bound by residues Tyr9, 54-55 (QV), and 67-68 (QT). The GST C-terminal domain maps to 85 to 207 (DLKERALIDM…LAPGSKRKPI (123 aa)).

It belongs to the GST superfamily. Alpha family. In terms of assembly, homodimer or heterodimer (with a subunit from group CL-4).

It localises to the cytoplasm. It catalyses the reaction RX + glutathione = an S-substituted glutathione + a halide anion + H(+). In terms of biological role, catalyzes the conjugation of GSH to a wide variety of electrophilic alkylating agents. Also involved in the metabolism of lipid hydroperoxides, prostaglandins and leukotriene A4 and in binding of non-substrate hydrophobic ligands such as bile acids, a number of drugs and thyroid hormones. This GST does not exhibit peroxidase activity. This chain is Glutathione S-transferase 3, found in Gallus gallus (Chicken).